The following is a 118-amino-acid chain: Small ribosomal subunit protein uS13 (118 aa).

The tract at residues 93–118 is disordered; the sequence is KGLPVRGQRTKTNARTRKGPRKPIRK.

The protein belongs to the universal ribosomal protein uS13 family. As to quaternary structure, part of the 30S ribosomal subunit. Forms a loose heterodimer with protein S19. Forms two bridges to the 50S subunit in the 70S ribosome.

In terms of biological role, located at the top of the head of the 30S subunit, it contacts several helices of the 16S rRNA. In the 70S ribosome it contacts the 23S rRNA (bridge B1a) and protein L5 of the 50S subunit (bridge B1b), connecting the 2 subunits; these bridges are implicated in subunit movement. Contacts the tRNAs in the A and P-sites. The sequence is that of Small ribosomal subunit protein uS13 from Ectopseudomonas mendocina (strain ymp) (Pseudomonas mendocina).